The following is a 368-amino-acid chain: 3-dehydroquinate synthase (368 aa).

Residues 71–76 (DGEAFK), 105–109 (GVVGD), 129–130 (TT), lysine 142, lysine 151, and 169–172 (TLRT) each bind NAD(+). Glutamate 184, histidine 247, and histidine 264 together coordinate Zn(2+).

The protein belongs to the sugar phosphate cyclases superfamily. Dehydroquinate synthase family. Co(2+) serves as cofactor. Zn(2+) is required as a cofactor. The cofactor is NAD(+).

The protein localises to the cytoplasm. It carries out the reaction 7-phospho-2-dehydro-3-deoxy-D-arabino-heptonate = 3-dehydroquinate + phosphate. It functions in the pathway metabolic intermediate biosynthesis; chorismate biosynthesis; chorismate from D-erythrose 4-phosphate and phosphoenolpyruvate: step 2/7. Its function is as follows. Catalyzes the conversion of 3-deoxy-D-arabino-heptulosonate 7-phosphate (DAHP) to dehydroquinate (DHQ). The polypeptide is 3-dehydroquinate synthase (Cupriavidus necator (strain ATCC 17699 / DSM 428 / KCTC 22496 / NCIMB 10442 / H16 / Stanier 337) (Ralstonia eutropha)).